Here is a 641-residue protein sequence, read N- to C-terminus: Methylenetetrahydrofolate reductase 2 (641 aa).

The Proton donor/acceptor role is filled by E20. Residues 20–25 and 52–53 contribute to the NAD(+) site; these read EYFPPK and TW. Residues 52–53, H81, 111–113, Y153, D172, and K179 contribute to the FAD site; these read TW and RGD. Residue D113 participates in substrate binding. A substrate-binding site is contributed by Q190.

Belongs to the methylenetetrahydrofolate reductase family. Requires FAD as cofactor.

The catalysed reaction is (6S)-5-methyl-5,6,7,8-tetrahydrofolate + NADP(+) = (6R)-5,10-methylene-5,6,7,8-tetrahydrofolate + NADPH + H(+). Its pathway is one-carbon metabolism; tetrahydrofolate interconversion. Functionally, major methylenetetrahydrofolate reductase required to generate the methyl groups necessary for methionine synthetase to convert homocysteine to methionine. Performs 15 to 20 percent of the total methylenetetrahydrofolate reductase activity of the cells. The protein is Methylenetetrahydrofolate reductase 2 (met11) of Schizosaccharomyces pombe (strain 972 / ATCC 24843) (Fission yeast).